The chain runs to 328 residues: Alanine racemase (328 aa).

Catalysis depends on lysine 33, which acts as the Proton acceptor; specific for D-alanine. Lysine 33 carries the N6-(pyridoxal phosphate)lysine modification. Arginine 118 lines the substrate pocket. Tyrosine 237 acts as the Proton acceptor; specific for L-alanine in catalysis. Residue methionine 283 coordinates substrate.

It belongs to the alanine racemase family. Pyridoxal 5'-phosphate is required as a cofactor.

The catalysed reaction is L-alanine = D-alanine. Its pathway is amino-acid biosynthesis; D-alanine biosynthesis; D-alanine from L-alanine: step 1/1. In terms of biological role, catalyzes the interconversion of L-alanine and D-alanine. May also act on other amino acids. The polypeptide is Alanine racemase (alr) (Campylobacter jejuni subsp. jejuni serotype O:6 (strain 81116 / NCTC 11828)).